The following is a 210-amino-acid chain: Pre-mRNA-splicing factor 38 (210 aa).

Positions 181–210 are disordered; that stretch reads PLSSSSDEEDDDEEQISKLESNEGAVDRNI. A compositionally biased stretch (basic and acidic residues) spans 195 to 210; the sequence is QISKLESNEGAVDRNI.

It belongs to the PRP38 family. In terms of assembly, component of the 25S U4/U6.U5 tri-snRNP particle, a subcomplex of the spliceosome.

The protein localises to the nucleus. Functionally, required for pre-mRNA splicing and maintenance of stable U6 small nuclear RNA levels. Implicated in the formation of stable and biologically active snRNP structures. As part of the U4/U6.U5 tri-snRNP particle, dispensible for spliceosome assembly, but required for conformational changes, which result in U4 snRNA release and the subsequent catalytic activation of the spliceosome. This Schizosaccharomyces pombe (strain 972 / ATCC 24843) (Fission yeast) protein is Pre-mRNA-splicing factor 38.